Consider the following 603-residue polypeptide: Geraniol synthase, chloroplastic (603 aa).

The N-terminal 35 residues, 1–35 (MSSISQKVVIGLNKAAANNNLQNLDRRGFKTRCVS), are a transit peptide targeting the chloroplast. Residues Arg319, Asp356, Asp360, Arg497, and Asp500 each coordinate (2E)-geranyl diphosphate. Mg(2+)-binding residues include Asp356 and Asp360. A DDXXD motif motif is present at residues 356–360 (DDVYD). Mg(2+)-binding residues include Asp500, Thr504, and Glu508.

Belongs to the terpene synthase family. Tpsb subfamily. As to quaternary structure, monomer. Requires Mg(2+) as cofactor. Mn(2+) serves as cofactor.

It is found in the plastid. The protein resides in the chloroplast. It carries out the reaction (2E)-geranyl diphosphate + H2O = (2E)-geraniol + diphosphate. It functions in the pathway secondary metabolite biosynthesis; terpenoid biosynthesis. In terms of biological role, monoterpene synthase (mono-TPS) involved in the biosynthesis of monoterpenes natural products. Catalyzes the conversion of (2E)-geranyl diphosphate (GPP) into geraniol. The chain is Geraniol synthase, chloroplastic from Perilla frutescens var. hirtella (Perilla citriodora).